The following is a 932-amino-acid chain: Protocadherin gamma-A9 (932 aa).

An N-terminal signal peptide occupies residues 1 to 28; that stretch reads MAAPTKCQLRGRLVLLCSLLGMLWEARA. 6 consecutive Cadherin domains span residues 29–133, 134–242, 243–347, 348–452, 453–562, and 570–683; these read SQIR…APKF, QAES…APVF, AQRI…RPEV, TITS…PPAF, SQAS…APEI, and DGST…IPAD. At 29–692 the chain is on the extracellular side; the sequence is SQIRYSVPEE…DLEASDLTLY (664 aa). Residues asparagine 47 and asparagine 127 are each glycosylated (N-linked (GlcNAc...) asparagine). Asparagine 389, asparagine 419, and asparagine 545 each carry an N-linked (GlcNAc...) asparagine glycan. Residues 693–713 traverse the membrane as a helical segment; sequence LVVAVAVVSCVFLTFVITLLA. Residues 714 to 932 are Cytoplasmic-facing; the sequence is LRLRHWHSSH…KKKSGKKEKK (219 aa). Disordered regions lie at residues 803-841 and 902-932; these read DTPL…WPNN and ATLT…KEKK. Polar residues predominate over residues 816–841; sequence WRFSQAQRPGTSGSQNGDDTGTWPNN. Residues 922-932 are compositionally biased toward basic residues; the sequence is NKKKSGKKEKK.

Its subcellular location is the cell membrane. In terms of biological role, potential calcium-dependent cell-adhesion protein. May be involved in the establishment and maintenance of specific neuronal connections in the brain. The chain is Protocadherin gamma-A9 (PCDHGA9) from Homo sapiens (Human).